The sequence spans 334 residues: Glycerol-3-phosphate dehydrogenase [NAD(P)+] (334 aa).

NADPH-binding residues include serine 14, tyrosine 15, histidine 35, and lysine 109. 3 residues coordinate sn-glycerol 3-phosphate: lysine 109, glycine 138, and threonine 140. Residue alanine 142 coordinates NADPH. The sn-glycerol 3-phosphate site is built by lysine 194, aspartate 247, serine 257, arginine 258, and asparagine 259. Lysine 194 serves as the catalytic Proton acceptor. An NADPH-binding site is contributed by arginine 258. The NADPH site is built by valine 282 and glutamate 284.

This sequence belongs to the NAD-dependent glycerol-3-phosphate dehydrogenase family.

The protein resides in the cytoplasm. The catalysed reaction is sn-glycerol 3-phosphate + NAD(+) = dihydroxyacetone phosphate + NADH + H(+). It catalyses the reaction sn-glycerol 3-phosphate + NADP(+) = dihydroxyacetone phosphate + NADPH + H(+). It functions in the pathway membrane lipid metabolism; glycerophospholipid metabolism. Catalyzes the reduction of the glycolytic intermediate dihydroxyacetone phosphate (DHAP) to sn-glycerol 3-phosphate (G3P), the key precursor for phospholipid synthesis. This Aeromonas salmonicida (strain A449) protein is Glycerol-3-phosphate dehydrogenase [NAD(P)+].